Here is a 379-residue protein sequence, read N- to C-terminus: Heme chaperone HemW (379 aa).

One can recognise a Radical SAM core domain in the interval 1 to 232; sequence MLQKPNSAYF…MDILAKNGYN (232 aa). Position 9 (tyrosine 9) interacts with S-adenosyl-L-methionine. [4Fe-4S] cluster-binding residues include cysteine 15, cysteine 19, and cysteine 22. Residues glycine 60, 61-62, glutamate 93, glutamine 120, arginine 132, and aspartate 157 contribute to the S-adenosyl-L-methionine site; that span reads GT.

It belongs to the anaerobic coproporphyrinogen-III oxidase family. HemW subfamily. As to quaternary structure, homodimer.

It localises to the cytoplasm. The protein resides in the cell membrane. Could serve in the delivery of heme to a membrane-localized target protein. Binds one molecule of heme per monomer, possibly covalently; heme and Fe-S cluster binding are independent. Incubation with the reductant sodium dithionite increases binding. Does not have coproporphyrinogen III dehydrogenase activity in vitro, does not complement an E.coli hemN deletion in vivo. Binds 1 Fe-S cluster, it is probably [4Fe-4S]. The cluster is coordinated with 3 cysteines and an exchangeable S-adenosyl-L-methionine; only dimeric protein has the cluster. The protein is Heme chaperone HemW of Lactococcus lactis subsp. lactis (strain IL1403) (Streptococcus lactis).